The sequence spans 402 residues: Propionate kinase (402 aa).

2 residues coordinate ATP: asparagine 11 and lysine 18. Asparagine 11 contacts Mg(2+). Arginine 86 serves as a coordination point for substrate. Residue aspartate 143 is the Proton donor/acceptor of the active site. Residues histidine 175, 203 to 207, 278 to 280, and 326 to 330 each bind ATP; these read HLGNG, DLR, and GIGEN.

The protein belongs to the acetokinase family. TdcD subfamily. As to quaternary structure, homodimer. Requires Mg(2+) as cofactor.

The catalysed reaction is propanoate + ATP = propanoyl phosphate + ADP. It participates in amino-acid degradation; L-threonine degradation via propanoate pathway; propanoate from L-threonine: step 4/4. Its function is as follows. Catalyzes the conversion of propionyl phosphate and ADP to propionate and ATP. The sequence is that of Propionate kinase from Salmonella typhimurium (strain D23580).